A 185-amino-acid chain; its full sequence is MRIGLYGGSFNPAHAGHLHVSRTALRRLRLDRVWWLVTPGNPLKDHGVLAPLDERVAQARALATDPRIAVTGFEGGIGSRYTADTLRWLVRRQPALHFVWIMGADSLGTFHRWRRFDEILSLMPVAVIDRPGYTLTAPSARAAQAFASARIPEADAPTLATRPTPAWAFLHGPRSALSSTALRTR.

It belongs to the NadD family.

It catalyses the reaction nicotinate beta-D-ribonucleotide + ATP + H(+) = deamido-NAD(+) + diphosphate. Its pathway is cofactor biosynthesis; NAD(+) biosynthesis; deamido-NAD(+) from nicotinate D-ribonucleotide: step 1/1. In terms of biological role, catalyzes the reversible adenylation of nicotinate mononucleotide (NaMN) to nicotinic acid adenine dinucleotide (NaAD). In Methylorubrum extorquens (strain CM4 / NCIMB 13688) (Methylobacterium extorquens), this protein is Probable nicotinate-nucleotide adenylyltransferase.